A 161-amino-acid chain; its full sequence is Phenolic acid decarboxylase PadC (161 aa).

Y11 and Y13 together coordinate substrate. The active-site Proton donor is the Y19. R41 is a binding site for substrate. E64 functions as the Proton acceptor in the catalytic mechanism.

Belongs to the PadC family. In terms of assembly, homodimer.

It catalyses the reaction (E)-4-coumarate + H(+) = 4-vinylphenol + CO2. The enzyme catalyses (E)-cinnamate + H(+) = styrene + CO2. The catalysed reaction is (E)-ferulate + H(+) = 2-methoxy-4-vinylphenol + CO2. Functionally, involved in the decarboxylation and detoxification of phenolic derivatives. It is able to catalyze the decarboxylation of ferulic, p-coumaric and caffeic acids. The polypeptide is Phenolic acid decarboxylase PadC (padC) (Bacillus subtilis (strain 168)).